The following is a 1377-amino-acid chain: Dicer-like protein 2 (1377 aa).

Residues 23–203 form the Helicase ATP-binding domain; the sequence is MFEASLKENI…MKTLESNLDS (181 aa). 36–43 lines the ATP pocket; sequence MDTGTGKT. Residues 144–147 carry the DEAH box motif; sequence DEAH. Residues 368–531 enclose the Helicase C-terminal domain; it reads ALINFLDKFD…AYQDEERRLR (164 aa). Residues 561–655 enclose the Dicer dsRNA-binding fold domain; that stretch reads VVTHLYHFCA…LPLTKNPEMR (95 aa). 2 RNase III domains span residues 914-1052 and 1092-1275; these read RLCA…LDGG and DGDL…VDSG. Mg(2+)-binding residues include E1131, D1261, and E1264.

The protein belongs to the helicase family. Dicer subfamily. Mg(2+) serves as cofactor. Mn(2+) is required as a cofactor.

Functionally, dicer-like endonuclease involved in cleaving double-stranded RNA in the RNA interference (RNAi) pathway. Produces 21 to 25 bp dsRNAs (siRNAs) which target the selective destruction of homologous RNAs leading to sequence-specific suppression of gene expression, called post-transcriptional gene silencing (PTGS). Part of a broad host defense response against viral infection and transposons. The polypeptide is Dicer-like protein 2 (dcl2) (Aspergillus oryzae (strain ATCC 42149 / RIB 40) (Yellow koji mold)).